A 319-amino-acid chain; its full sequence is Taste receptor type 2 member 39 (319 aa).

The Extracellular segment spans residues 1 to 16; the sequence is MAQPSNYWKQDLLPLS. Residues 17 to 37 traverse the membrane as a helical segment; that stretch reads ILILTLVATECTIGIIASGII. Residues 38 to 56 lie on the Cytoplasmic side of the membrane; it reads TVVNAVSWVQKRAVSITTR. A helical membrane pass occupies residues 57-77; the sequence is ILLLLSVSRIGLQSIILIEMT. Residues 78 to 97 are Extracellular-facing; sequence SSIFNFSSYNSVLYRVSRVS. Asparagine 82 carries an N-linked (GlcNAc...) asparagine glycan. The chain crosses the membrane as a helical span at residues 98 to 118; sequence FVFLNYCSLWFAALLSFFHFV. The Cytoplasmic portion of the chain corresponds to 119–137; the sequence is KIANFSYPLFFKLKWRISE. The chain crosses the membrane as a helical span at residues 138–158; sequence LMPWLLWLSVFISFSSSMFFC. The Extracellular segment spans residues 159–187; the sequence is NHKYTVYNNISLSSNICNFTMELYVAEAN. Residues asparagine 167 and asparagine 176 are each glycosylated (N-linked (GlcNAc...) asparagine). Residues 188 to 208 traverse the membrane as a helical segment; that stretch reads VVNVAFLFSFGILPPLTMFIA. Residues 209–247 lie on the Cytoplasmic side of the membrane; that stretch reads TATLLIFSLRRHTLHMRNGDADSRNPRVEAHKQAIKETS. The chain crosses the membrane as a helical span at residues 248-268; the sequence is CFLFLYILYAAVLFLSTSNIA. Residues 269–273 lie on the Extracellular side of the membrane; sequence DASLF. The helical transmembrane segment at 274–294 threads the bilayer; that stretch reads WSSVLRISLPVYPAGHSVLLI. Over 295–319 the chain is Cytoplasmic; sequence QSNPGLKRTWKQLLSQIHLHLQSRY.

Belongs to the G-protein coupled receptor T2R family.

It localises to the membrane. Putative taste receptor which may play a role in the perception of bitterness. This is Taste receptor type 2 member 39 from Rattus norvegicus (Rat).